We begin with the raw amino-acid sequence, 200 residues long: Holliday junction resolvase RecU (200 aa).

A disordered region spans residues Met-1–His-25. Mg(2+) is bound by residues Thr-85, Asp-87, Glu-100, and Gln-119.

It belongs to the RecU family. Requires Mg(2+) as cofactor.

It localises to the cytoplasm. The catalysed reaction is Endonucleolytic cleavage at a junction such as a reciprocal single-stranded crossover between two homologous DNA duplexes (Holliday junction).. Its function is as follows. Endonuclease that resolves Holliday junction intermediates in genetic recombination. Cleaves mobile four-strand junctions by introducing symmetrical nicks in paired strands. Promotes annealing of linear ssDNA with homologous dsDNA. Required for DNA repair, homologous recombination and chromosome segregation. In Bacillus thuringiensis (strain Al Hakam), this protein is Holliday junction resolvase RecU.